Reading from the N-terminus, the 340-residue chain is Protein-arginine kinase (340 aa).

The 222-residue stretch at 21–242 (VVLSSRIRLA…EQIIMQERVA (222 aa)) folds into the Phosphagen kinase C-terminal domain. Residues 24-28 (SSRIR), histidine 79, arginine 113, 164-168 (RASVM), and 195-200 (RGIYGE) each bind ATP.

It belongs to the ATP:guanido phosphotransferase family.

It carries out the reaction L-arginyl-[protein] + ATP = N(omega)-phospho-L-arginyl-[protein] + ADP + H(+). In terms of biological role, catalyzes the specific phosphorylation of arginine residues in proteins. This chain is Protein-arginine kinase, found in Listeria monocytogenes serotype 4b (strain CLIP80459).